Consider the following 57-residue polypeptide: DNA gyrase inhibitor YacG (57 aa).

Zn(2+) is bound by residues Cys-10, Cys-13, Cys-25, and Cys-29.

This sequence belongs to the DNA gyrase inhibitor YacG family. In terms of assembly, interacts with GyrB. It depends on Zn(2+) as a cofactor.

In terms of biological role, inhibits all the catalytic activities of DNA gyrase by preventing its interaction with DNA. Acts by binding directly to the C-terminal domain of GyrB, which probably disrupts DNA binding by the gyrase. This is DNA gyrase inhibitor YacG from Brucella abortus (strain 2308).